A 1010-amino-acid chain; its full sequence is Protein translocase subunit SecA (1010 aa).

Residues glutamine 86, 104–108 (GEGKT), and aspartate 535 contribute to the ATP site. A compositionally biased stretch (low complexity) spans 893–904 (QAGAADGNAKGA). Residues 893–916 (QAGAADGNAKGARTVRHSVRLPGR) are disordered. 4 residues coordinate Zn(2+): cysteine 920, cysteine 922, cysteine 931, and histidine 932. A compositionally biased stretch (low complexity) spans 950–981 (QHAAVAADTPAQPAPQATATRPPTSQVPRGRA). Positions 950 to 1010 (QHAAVAADTP…RGKGASARKK (61 aa)) are disordered.

Belongs to the SecA family. As to quaternary structure, monomer and homodimer. Part of the essential Sec protein translocation apparatus which comprises SecA, SecYEG and auxiliary proteins SecDF. Other proteins may also be involved. Zn(2+) is required as a cofactor.

It is found in the cell membrane. The protein localises to the cytoplasm. It carries out the reaction ATP + H2O + cellular proteinSide 1 = ADP + phosphate + cellular proteinSide 2.. Part of the Sec protein translocase complex. Interacts with the SecYEG preprotein conducting channel. Has a central role in coupling the hydrolysis of ATP to the transfer of proteins into and across the cell membrane, serving as an ATP-driven molecular motor driving the stepwise translocation of polypeptide chains across the membrane. This chain is Protein translocase subunit SecA, found in Roseiflexus sp. (strain RS-1).